Reading from the N-terminus, the 154-residue chain is U1 small nuclear ribonucleoprotein C (154 aa).

Residues 4–36 form a Matrin-type zinc finger; the sequence is YYCDYCDTYLTHDSPSVRKTHCTGRKHKDNVKF.

It belongs to the U1 small nuclear ribonucleoprotein C family. U1 snRNP is composed of the 7 core Sm proteins B/B', D1, D2, D3, E, F and G that assemble in a heptameric protein ring on the Sm site of the small nuclear RNA to form the core snRNP, and at least 3 U1 snRNP-specific proteins U1-70K, U1-A and U1-C. U1-C interacts with U1 snRNA and the 5' splice-site region of the pre-mRNA.

It localises to the nucleus. In terms of biological role, component of the spliceosomal U1 snRNP, which is essential for recognition of the pre-mRNA 5' splice-site and the subsequent assembly of the spliceosome. U1-C is directly involved in initial 5' splice-site recognition for both constitutive and regulated alternative splicing. The interaction with the 5' splice-site seems to precede base-pairing between the pre-mRNA and the U1 snRNA. Stimulates commitment or early (E) complex formation by stabilizing the base pairing of the 5' end of the U1 snRNA and the 5' splice-site region. This is U1 small nuclear ribonucleoprotein C from Aedes aegypti (Yellowfever mosquito).